The primary structure comprises 493 residues: Glycerol kinase (493 aa).

Residue Thr-11 coordinates ADP. Residues Thr-11, Thr-12, and Ser-13 each contribute to the ATP site. A sn-glycerol 3-phosphate-binding site is contributed by Thr-11. Residue Arg-15 coordinates ADP. Sn-glycerol 3-phosphate is bound by residues Arg-80, Glu-81, Tyr-132, and Asp-241. Glycerol-binding residues include Arg-80, Glu-81, Tyr-132, Asp-241, and Gln-242. Thr-263 and Gly-306 together coordinate ADP. Residues Thr-263, Gly-306, Gln-310, and Gly-408 each contribute to the ATP site. Residue Gly-408 participates in ADP binding.

Belongs to the FGGY kinase family.

The catalysed reaction is glycerol + ATP = sn-glycerol 3-phosphate + ADP + H(+). Its pathway is polyol metabolism; glycerol degradation via glycerol kinase pathway; sn-glycerol 3-phosphate from glycerol: step 1/1. Its activity is regulated as follows. Inhibited by fructose 1,6-bisphosphate (FBP). Key enzyme in the regulation of glycerol uptake and metabolism. Catalyzes the phosphorylation of glycerol to yield sn-glycerol 3-phosphate. This Cereibacter sphaeroides (strain ATCC 17025 / ATH 2.4.3) (Rhodobacter sphaeroides) protein is Glycerol kinase.